Reading from the N-terminus, the 168-residue chain is 3'-5' exoribonuclease MT2234.1 (168 aa).

Asp6 is a Mg(2+) binding site. An RNA binding region spans residues 6-9; it reads DTEF.

Homodimer. The cofactor is Mg(2+).

Its function is as follows. Exonuclease that cleaves single-stranded 3' overhangs of double-stranded RNA. This chain is 3'-5' exoribonuclease MT2234.1, found in Mycobacterium tuberculosis (strain CDC 1551 / Oshkosh).